Reading from the N-terminus, the 142-residue chain is Large ribosomal subunit protein uL13 (142 aa).

It belongs to the universal ribosomal protein uL13 family. Part of the 50S ribosomal subunit.

Its function is as follows. This protein is one of the early assembly proteins of the 50S ribosomal subunit, although it is not seen to bind rRNA by itself. It is important during the early stages of 50S assembly. The protein is Large ribosomal subunit protein uL13 of Ectopseudomonas mendocina (strain ymp) (Pseudomonas mendocina).